The chain runs to 642 residues: Forkhead box protein K2 (642 aa).

The 62-residue stretch at 30–91 (VTIGRNSSQG…NGVFVDGVFQ (62 aa)) folds into the FHA domain. Residues 201 to 221 (QSENDKDASGGDSPKDDSKPP) are disordered. The segment covering 203–219 (ENDKDASGGDSPKDDSK) has biased composition (basic and acidic residues). A DNA-binding region (fork-head) is located at residues 219–314 (KPPYSYAQLI…EQAFRKRRPR (96 aa)). The tract at residues 261–279 (KGWQNSIRHNLSLNRYFIK) is DNA-binding; major groove. Mg(2+) contacts are provided by Leu271, Ser272, Asn274, and Phe277. 2 DNA-binding; minor groove regions span residues 289-293 (KGSFW) and 309-314 (RKRRPR). Disordered regions lie at residues 323–359 (LGPLSSRSAPASPNHSGVFSAHSSGVQTPESLSREGS) and 589–615 (ASASLPTKRQNGDQSEQPDIKRGKTDE). 2 stretches are compositionally biased toward polar residues: residues 327–353 (SSRSAPASPNHSGVFSAHSSGVQTPES) and 589–605 (ASASLPTKRQNGDQSEQ). A compositionally biased stretch (basic and acidic residues) spans 606 to 615 (PDIKRGKTDE).

In neurula embryos, expressed strongly in the future floor plate and weakly in the neural crest progenitor cells. As development progresses, expression becomes stronger in neural crest cells. At stage 24, expressed in the eye, brain, branchial arches and in the presomitic mesoderm in the posterior embryo. At stage 29, additionally expressed in the pronephric tubules. At stage 35, expressed in the migrating lateral muscle precursors of the abdomen. Additionally, the developing proctodeum and head structures including the branchial arches, eyes and otic vesicles continue to show expression. Expression also persists in the nephros.

It is found in the nucleus. The protein localises to the cytoplasm. In terms of biological role, transcriptional regulator involved in different processes such as glucose metabolism, aerobic glycolysis and autophagy. Recognizes and binds the forkhead DNA sequence motif (5'-GTAAACA-3') and can both act as a transcription activator or repressor, depending on the context. Acts as a key regulator of metabolic reprogramming towards aerobic glycolysis, a process in which glucose is converted to lactate in the presence of oxygen. Acts as a negative regulator of autophagy in skeletal muscle: in response to starvation, enters the nucleus, binds the promoters of autophagy genes and represses their expression, preventing proteolysis of skeletal muscle proteins. The sequence is that of Forkhead box protein K2 from Xenopus laevis (African clawed frog).